The chain runs to 116 residues: Protein BIC2 (116 aa).

Disordered regions lie at residues Met1 to Pro33 and Asp95 to Cys116.

Its subcellular location is the nucleus. Its function is as follows. Regulates the blue-light dependent dimerization of CRY2 and formation of photobodies. Inhibits CRY phosphorylation. This is Protein BIC2 from Arabidopsis thaliana (Mouse-ear cress).